Reading from the N-terminus, the 1168-residue chain is Carboxylic acid reductase (1168 aa).

Residues His290, Ser385, 407-408 (EG), Thr412, Asp485, 497-500 (YLDR), Lys506, and Lys606 each bind AMP. Residues 645–720 (APVLPTLCRA…ALADHIEAAR (76 aa)) form the Carrier domain. Ser679 is subject to O-(pantetheine 4'-phosphoryl)serine. NADP(+)-binding positions include 777-780 (TGFL), Arg804, Arg814, 844-845 (DK), 870-872 (PAA), Ser910, Tyr946, and Lys950.

It belongs to the ATP-dependent AMP-binding enzyme family. Carboxylic acid reductase subfamily. Pantetheine 4'-phosphate is required as a cofactor.

The catalysed reaction is a carboxylate + ATP + NADPH + H(+) = an aldehyde + AMP + diphosphate + NADP(+). The enzyme catalyses a medium-chain fatty acid + ATP + H(+) = a medium-chain fatty acyl-AMP + diphosphate. It carries out the reaction a long-chain fatty acid + ATP + H(+) = a long-chain fatty acyl-AMP + diphosphate. It catalyses the reaction dodecanoate + ATP + H(+) = dodecanoyl-AMP + diphosphate. The catalysed reaction is hexadecanoate + ATP + H(+) = hexadecanoyl-AMP + diphosphate. In terms of biological role, catalyzes the ATP- and NADPH-dependent reduction of carboxylic acids to the corresponding aldehydes. In vitro, also catalyzes the activation of medium/long-chain fatty acids as acyl-adenylates (acyl-AMP). This is Carboxylic acid reductase from Mycobacterium tuberculosis (strain ATCC 25618 / H37Rv).